Reading from the N-terminus, the 557-residue chain is Potassium-transporting ATPase potassium-binding subunit (557 aa).

12 helical membrane passes run 5–25 (GFLL…PLGS), 63–83 (LSAI…MLLG), 132–152 (GLTV…FAFI), 170–190 (LLRI…LFFI), 253–273 (FVQM…FGEV), 283–303 (LLWA…WAEV), 329–349 (VLVS…AVIA), 356–376 (ALGG…FGGV), 379–399 (GLYG…LMIG), 416–436 (LTAL…ALAM), 484–504 (LLAF…MAIA), and 526–546 (LFVG…FIPA).

This sequence belongs to the KdpA family. As to quaternary structure, the system is composed of three essential subunits: KdpA, KdpB and KdpC.

It localises to the cell inner membrane. Part of the high-affinity ATP-driven potassium transport (or Kdp) system, which catalyzes the hydrolysis of ATP coupled with the electrogenic transport of potassium into the cytoplasm. This subunit binds the periplasmic potassium ions and delivers the ions to the membrane domain of KdpB through an intramembrane tunnel. The sequence is that of Potassium-transporting ATPase potassium-binding subunit from Escherichia coli (strain SMS-3-5 / SECEC).